We begin with the raw amino-acid sequence, 106 residues long: Transcription factor TRY (106 aa).

In terms of domain architecture, Myb-like spans 34-71 (TEQEEDLIFRMYRLVGDRWDLIAGRVPGRQPEEIERYW). The interval 83-106 (RRQLHSSSHKHTKPHRPRFSIYPS) is disordered. Over residues 84 to 100 (RQLHSSSHKHTKPHRPR) the composition is skewed to basic residues.

Interacts with GL3 and thus prevents GL1 GL3 interaction. Also interacts with BHLH2. Expressed in roots, leaves, siliques and inflorescences.

The protein localises to the nucleus. Transcription factor. Involved in epidermal cell fate specification. Negative regulator of trichome development, including endoreplication, by lateral inhibition involving intercellular interactions. Promotes the formation of hair developing cells (trichoblasts) in H position in root epidermis, probably by inhibiting non-hair cell (atrichoblasts) formation. This chain is Transcription factor TRY (TRY), found in Arabidopsis thaliana (Mouse-ear cress).